We begin with the raw amino-acid sequence, 421 residues long: Gamma-glutamyl phosphate reductase (421 aa).

Belongs to the gamma-glutamyl phosphate reductase family.

Its subcellular location is the cytoplasm. It catalyses the reaction L-glutamate 5-semialdehyde + phosphate + NADP(+) = L-glutamyl 5-phosphate + NADPH + H(+). The protein operates within amino-acid biosynthesis; L-proline biosynthesis; L-glutamate 5-semialdehyde from L-glutamate: step 2/2. Catalyzes the NADPH-dependent reduction of L-glutamate 5-phosphate into L-glutamate 5-semialdehyde and phosphate. The product spontaneously undergoes cyclization to form 1-pyrroline-5-carboxylate. This is Gamma-glutamyl phosphate reductase from Pseudomonas paraeruginosa (strain DSM 24068 / PA7) (Pseudomonas aeruginosa (strain PA7)).